A 537-amino-acid chain; its full sequence is Phosphoenolpyruvate carboxykinase (ATP) (537 aa).

Substrate is bound by residues R61, Y195, and K201. Residues K201, H220, and 236 to 244 contribute to the ATP site; that span reads GLSGTGKTT. Mn(2+) is bound by residues K201 and H220. D257 contacts Mn(2+). E285 is an ATP binding site. Basic and acidic residues predominate over residues 311 to 321; sequence PDFDNGSKTEN. Positions 311 to 342 are disordered; that stretch reads PDFDNGSKTENTRSAYPLESIPNASPTGRAGQ. Position 323 (R323) interacts with substrate. The ATP site is built by R323 and T448.

It belongs to the phosphoenolpyruvate carboxykinase (ATP) family. The cofactor is Mn(2+).

The protein resides in the cytoplasm. The catalysed reaction is oxaloacetate + ATP = phosphoenolpyruvate + ADP + CO2. The protein operates within carbohydrate biosynthesis; gluconeogenesis. Its function is as follows. Involved in the gluconeogenesis. Catalyzes the conversion of oxaloacetate (OAA) to phosphoenolpyruvate (PEP) through direct phosphoryl transfer between the nucleoside triphosphate and OAA. The chain is Phosphoenolpyruvate carboxykinase (ATP) from Rhodopseudomonas palustris (strain BisB5).